The chain runs to 433 residues: Histidinol dehydrogenase (433 aa).

Residues Tyr-133, Gln-194, and Asn-217 each contribute to the NAD(+) site. Substrate-binding residues include Ser-240, Gln-262, and His-265. Residues Gln-262 and His-265 each contribute to the Zn(2+) site. Active-site proton acceptor residues include Glu-330 and His-331. The substrate site is built by His-331, Asp-364, Glu-418, and His-423. Residue Asp-364 participates in Zn(2+) binding. His-423 serves as a coordination point for Zn(2+).

Belongs to the histidinol dehydrogenase family. The cofactor is Zn(2+).

The enzyme catalyses L-histidinol + 2 NAD(+) + H2O = L-histidine + 2 NADH + 3 H(+). It functions in the pathway amino-acid biosynthesis; L-histidine biosynthesis; L-histidine from 5-phospho-alpha-D-ribose 1-diphosphate: step 9/9. Functionally, catalyzes the sequential NAD-dependent oxidations of L-histidinol to L-histidinaldehyde and then to L-histidine. The sequence is that of Histidinol dehydrogenase from Dechloromonas aromatica (strain RCB).